Consider the following 473-residue polypeptide: Serine palmitoyltransferase 1 (473 aa).

Topologically, residues 1–15 are lumenal; sequence MATVAEQWVLVEMVQ. Residues 1 to 66 form an interaction with SPTLC2 region; that stretch reads MATVAEQWVL…KEELIEEWQP (66 aa). A helical membrane pass occupies residues 16-36; sequence ALYEAPAYHLILEGILILWII. At 37–473 the chain is on the cytoplasmic side; it reads RLLFSKTYKL…ISEVAQTVLL (437 aa). Residue Tyr-164 is modified to Phosphotyrosine; by ABL.

The protein belongs to the class-II pyridoxal-phosphate-dependent aminotransferase family. In terms of assembly, component of the serine palmitoyltransferase (SPT) complex, which is also composed of SPTLC2 or SPTLC3 and SPTSSA or SPTSSB. The heterodimer with SPTLC2 or SPTLC3 forms the catalytic core of the enzyme, while SPTSSA or SPTSSB subunits determine substrate specificity. SPT also interacts with ORMDL proteins, especially ORMDL3, which negatively regulate SPT activity in the presence of ceramides. Forms dimers of heterodimers with SPTLC2. Interacts with RTN4. Pyridoxal 5'-phosphate is required as a cofactor. Phosphorylation at Tyr-164 inhibits activity and promotes cell survival.

It localises to the endoplasmic reticulum membrane. It catalyses the reaction L-serine + hexadecanoyl-CoA + H(+) = 3-oxosphinganine + CO2 + CoA. The enzyme catalyses octadecanoyl-CoA + L-serine + H(+) = 3-oxoeicosasphinganine + CO2 + CoA. The catalysed reaction is tetradecanoyl-CoA + L-serine + H(+) = 3-oxohexadecasphinganine + CO2 + CoA. It carries out the reaction dodecanoyl-CoA + L-serine + H(+) = 3-oxotetradecasphinganine + CO2 + CoA. The protein operates within lipid metabolism; sphingolipid metabolism. Its activity is regulated as follows. SPT complex catalytic activity is negatively regulated by ORMDL proteins, including ORMDL3, in the presence of ceramides. This mechanism allows to maintain ceramide levels at sufficient concentrations for the production of complex sphingolipids, but which prevents the accumulation of ceramides to levels that trigger apoptosis. Functionally, component of the serine palmitoyltransferase multisubunit enzyme (SPT) that catalyzes the initial and rate-limiting step in sphingolipid biosynthesis by condensing L-serine and activated acyl-CoA (most commonly palmitoyl-CoA) to form long-chain bases. The SPT complex is also composed of SPTLC2 or SPTLC3 and SPTSSA or SPTSSB. Within this complex, the heterodimer with SPTLC2 or SPTLC3 forms the catalytic core. The composition of the serine palmitoyltransferase (SPT) complex determines the substrate preference. The SPTLC1-SPTLC2-SPTSSA complex shows a strong preference for C16-CoA substrate, while the SPTLC1-SPTLC3-SPTSSA isozyme uses both C14-CoA and C16-CoA as substrates, with a slight preference for C14-CoA. The SPTLC1-SPTLC2-SPTSSB complex shows a strong preference for C18-CoA substrate, while the SPTLC1-SPTLC3-SPTSSB isozyme displays an ability to use a broader range of acyl-CoAs, without apparent preference. Required for adipocyte cell viability and metabolic homeostasis. This chain is Serine palmitoyltransferase 1 (SPTLC1), found in Bos taurus (Bovine).